The following is a 268-amino-acid chain: Microtubule-associated protein RP/EB family member 1 (268 aa).

Position 2 is an N-acetylalanine (alanine 2). The 103-residue stretch at 14–116 (NLSRHDMLAW…FVQWFKKFFD (103 aa)) folds into the Calponin-homology (CH) domain. N6-crotonyllysine is present on lysine 66. Residue tyrosine 124 is modified to Phosphotyrosine. The interval 124 to 268 (YDPVAARQGQ…GGPQEEQEEY (145 aa)) is interaction with MTUS2/TIP150. The interval 146–180 (LSKPKKPLGSSTAAPQRPIATQRTTAAPKAGPGMV) is disordered. A compositionally biased stretch (polar residues) spans 154–170 (GSSTAAPQRPIATQRTT). At serine 155 the chain carries Phosphoserine. The EB1 C-terminal domain maps to 185 to 255 (GVGNGDDEAA…LYATDEGFVI (71 aa)). An interaction with APC region spans residues 206 to 211 (TVEDLE). Positions 208-268 (EDLEKERDFY…GGPQEEQEEY (61 aa)) are DCTN1-binding. Position 220 is an N6-acetyllysine (lysine 220). Positions 220-242 (KLRNIELICQENEGENDPVLQRI) are APC-binding. Residues 232–255 (EGENDPVLQRIVDILYATDEGFVI) are interaction with SKA1.

This sequence belongs to the MAPRE family. In terms of assembly, homodimer. Heterodimer with MAPRE3. Interacts (via C-terminal residues 206-211) with APC (via C-terminal residues 2674-2845); the interaction inhibits association with and bundling of F-actin. Interacts with DCTN1, DIAPH1 and DIAPH2. Interacts with DCTN2, TERF1 and dynein intermediate chain. Interacts with CLASP2, DST, KIF2C and STIM1; probably required for their targeting to the growing microtubule plus ends. Interacts with MTUS2; interaction is direct and probably targets MTUS2 to microtubules. Interacts (via C-terminus) with SKA1 (via SXIP motif); the interaction is direct and stabilizes the kinetochore-microtubule attachment of the SKA1 complex. Interacts with APC2. Interacts with CLASP1. Interacts (via C-terminus) with CLIP1. Interacts with SLAIN2 and SLAIN1. Interacts with MACF1. Interacts with KIF18B; this interaction is required for efficient accumulation of KIF18B at microtubule plus ends. Interacts with MISP. Interacts with RABL2/RABL2A; binds preferentially to GTP-bound RABL2. Interacts with KCNAB2. Interacts with KNSTRN. Interacts with NCKAP5L. Interacts with AKAP9. Interacts with PDE4DIP isoform 2/MMG8/SMYLE; this interaction is required for its recruitment to the Golgi apparatus. May form a pericentrosomal complex with AKAP9, CDK5RAP2 and PDE4DIP isoform 2/MMG8/SMYLE; within this complex, MAPRE1 binding to CDK5RAP2 may be mediated by PDE4DIP. Contrary to other mammalian species, does not interact with CDK5RAP2, possibly due to the lack of conservation of the MAPRE1-binding motif in mouse CDK5RAP2. Interacts with AKNA. Interacts with GAS2L1, GAS2L2, and GAS2L3. Interacts with RARRES1 and AGBL2. Acetylation at Lys-220 by KAT2B/PCAF promotes dynamic kinetochore-microtubule interactions in early mitosis. Post-translationally, crotonylated by KAT5 during mitosis, promoting astral microtubule plasticity and dynamic connection between astral microtubules and the cortex during mitotic chromosome segregation, thereby ensuring accurate spindle positioning in mitosis. Decrotonylated by HDAC3. As to expression, expressed within the midpiece of sperm tail (at protein level).

The protein localises to the cytoplasm. Its subcellular location is the cytoskeleton. It is found in the microtubule organizing center. The protein resides in the centrosome. It localises to the spindle. The protein localises to the spindle pole. In terms of biological role, plus-end tracking protein (+TIP) that binds to the plus-end of microtubules and regulates the dynamics of the microtubule cytoskeleton. Recruits other +TIP proteins to microtubules by binding to a conserved Ser-X-Leu-Pro (SXLP) motif in their polypeptide chains. Promotes cytoplasmic microtubule nucleation and elongation. Involved in mitotic spindle positioning by stabilizing microtubules and promoting dynamic connection between astral microtubules and the cortex during mitotic chromosome segregation. Assists chromosome alignment in metaphase by recruiting the SKA complex to the spindle and stabilizing its interactions with microtubule bundles (K-fibers). Also acts as a regulator of minus-end microtubule organization: interacts with the complex formed by AKAP9 and PDE4DIP, leading to recruit CAMSAP2 to the Golgi apparatus, thereby tethering non-centrosomal minus-end microtubules to the Golgi, an important step for polarized cell movement. Promotes elongation of CAMSAP2-decorated microtubule stretches on the minus-end of microtubules. Acts as a regulator of autophagosome transport via interaction with CAMSAP2. Functions downstream of Rho GTPases and DIAPH1 in stable microtubule formation. May play a role in cell migration. This Mus musculus (Mouse) protein is Microtubule-associated protein RP/EB family member 1 (Mapre1).